A 129-amino-acid chain; its full sequence is Natriuretic peptides B (129 aa).

Residues 1–26 form the signal peptide; the sequence is MDPQKALSRTLLLLLFLHLSLLGCRS. Cys107 and Cys123 are disulfide-bonded.

It belongs to the natriuretic peptide family. The precursor molecule is proteolytically cleaved, possibly by FURIN or CORIN, to produce the active peptide. May undergo further proteolytic cleavage by various proteases such as DPP4, MME and possibly FAP, to give rise to a variety of shorter peptides. May be cleaved at Pro-99 by the prolyl endopeptidase FAP (seprase) activity (in vitro). May be degraded by IDE. During IDE degradation, the resulting products initially increase the activation of NPR1 and can also stimulate NPR2 to produce cGMP before the fragments are completely degraded and inactivated by IDE (in vitro).

The protein localises to the secreted. Its function is as follows. Cardiac hormone that plays a key role in mediating cardio-renal homeostasis. May also function as a paracrine antifibrotic factor in the heart. Acts by specifically binding and stimulating NPR1 to produce cGMP, which in turn activates effector proteins that drive various biological responses. Involved in regulating the extracellular fluid volume and maintaining the fluid-electrolyte balance through natriuresis, diuresis, vasorelaxation, and inhibition of renin and aldosterone secretion. Binds the clearance receptor NPR3. In Ovis aries (Sheep), this protein is Natriuretic peptides B (NPPB).